The sequence spans 1158 residues: Serine/threonine/tyrosine-interacting-like protein 2 (1158 aa).

Disordered regions lie at residues 1–21 (MATR…DEAN), 280–303 (EERE…GTGS), 315–337 (EEED…QASK), 360–392 (LLSD…VERI), 407–444 (GYRR…ESVS), 492–527 (SRRY…GSEA), 559–582 (KDLG…KNPS), 597–622 (QKKV…LAKK), 873–915 (KVKE…CSSL), and 940–1135 (SGLR…MDDE). The segment covering 8–19 (EEEQVVPSEEDE) has biased composition (acidic residues). The 149-residue stretch at 132-280 (NEVDEVWPNV…LRELNEKLME (149 aa)) folds into the Tyrosine-protein phosphatase domain. Residues 322–337 (SHLSGSSLGKATQASK) show a composition bias toward polar residues. Serine 377 is subject to Phosphoserine. Residue threonine 433 is modified to Phosphothreonine. Over residues 435–444 (SESSAWESVS) the composition is skewed to low complexity. Positions 500 to 517 (KREEAADRSSEAGSRVRE) are enriched in basic and acidic residues. A Phosphoserine modification is found at serine 509. Positions 600 to 619 (VGSENKEEVVELSKGEDSAL) are enriched in basic and acidic residues. The span at 877-890 (DEDDGVGDGDEDTD) shows a compositional bias: acidic residues. Polar residues-rich tracts occupy residues 897 to 914 (RYSS…TCSS) and 952 to 966 (SDWS…TRSS). Over residues 974–983 (KSSSYKFSKS) the composition is skewed to low complexity. Residue serine 985 is modified to Phosphoserine. Positions 990–999 (TSSYHEANGN) are enriched in polar residues. Low complexity predominate over residues 1000–1012 (SVRSTSRFSSSST). Position 1036 is a phosphoserine (serine 1036). 3 stretches are compositionally biased toward basic and acidic residues: residues 1044 to 1056 (RTPE…ESPE), 1064 to 1079 (RSRD…KSDF), and 1094 to 1111 (RSEE…EEGR). Over residues 1126-1135 (REEEEEMDDE) the composition is skewed to acidic residues.

The protein belongs to the protein-tyrosine phosphatase family. Non-receptor class dual specificity subfamily.

Its subcellular location is the cytoplasm. It localises to the myofibril. It is found in the sarcomere. In terms of biological role, may be required for myofiber maturation. The chain is Serine/threonine/tyrosine-interacting-like protein 2 from Homo sapiens (Human).